The following is a 2146-amino-acid chain: YLP motif-containing protein 1 (2146 aa).

Disordered stretches follow at residues 1-381 (MYPN…ARLK) and 562-880 (PPVM…FKMQ). Residues 14–26 (YPPPPVPPPPPVA) are compositionally biased toward pro residues. Low complexity-rich tracts occupy residues 27–48 (LPEA…PSSS) and 58–79 (LAQL…LQPH). Composition is skewed to pro residues over residues 80–92 (HLPP…PPVM), 101–113 (QPPP…PPGP), 147–157 (PESPPVPPGSY), 165–175 (MPPPQPPPSYY), and 183–194 (YLPPAQPSPSQS). The span at 195-237 (PPSQSYLAPTPSYSSSSSSSQSYLSHSQSYLPSSQASPSRPSQ) shows a compositional bias: low complexity. Composition is skewed to polar residues over residues 256-279 (NKTT…QQQA) and 286-308 (STMT…LQQR). The span at 309–319 (TKVHLPGHKKG) shows a compositional bias: basic residues. Over residues 325-334 (DTPEPVKEEV) the composition is skewed to basic and acidic residues. Pro residues-rich tracts occupy residues 349-368 (EEPP…PPEE), 562-579 (PPVM…PGMP), and 586-642 (GPPP…PQGI). Residues 643–663 (PPQLTAAPVPPASSSQSSQVP) show a composition bias toward low complexity. A compositionally biased stretch (polar residues) spans 692-702 (AGPSEQVNSKA). An N6-methyllysine modification is found at lysine 735. Serine 756 carries the post-translational modification Phosphoserine. The span at 758–806 (RGPRFDGPRRFEDLGSRCEGPRPKGPRFEGNRPDGPRPRYEGHPAEGTK) shows a compositional bias: basic and acidic residues. Omega-N-methylarginine is present on arginine 814. 2 stretches are compositionally biased toward polar residues: residues 820-835 (FYIT…QSGP) and 868-880 (DTSS…FKMQ). Residue serine 829 is modified to Phosphoserine. Residue arginine 831 is modified to Omega-N-methylarginine. A Glycyl lysine isopeptide (Lys-Gly) (interchain with G-Cter in SUMO2) cross-link involves residue lysine 891. 2 disordered regions span residues 895–1211 (AAQS…GRNA) and 1243–1351 (NRED…DDRW). Composition is skewed to polar residues over residues 896–909 (AQSN…QQEP) and 923–933 (NWDQNVQSMET). Lysine 983 is covalently cross-linked (Glycyl lysine isopeptide (Lys-Gly) (interchain with G-Cter in SUMO1); alternate). Lysine 983 is covalently cross-linked (Glycyl lysine isopeptide (Lys-Gly) (interchain with G-Cter in SUMO2); alternate). 3 stretches are compositionally biased toward basic and acidic residues: residues 994 to 1012 (NNQD…RLEG), 1027 to 1036 (RMEDTRDKGL), and 1053 to 1093 (KQED…REKV). Residue lysine 1053 forms a Glycyl lysine isopeptide (Lys-Gly) (interchain with G-Cter in SUMO1); alternate linkage. Lysine 1053 participates in a covalent cross-link: Glycyl lysine isopeptide (Lys-Gly) (interchain with G-Cter in SUMO2); alternate. Phosphoserine is present on residues serine 1100 and serine 1119. 2 stretches are compositionally biased toward basic and acidic residues: residues 1129–1211 (GSRE…GRNA) and 1243–1264 (NRED…RGPW). A compositionally biased stretch (acidic residues) spans 1266 to 1276 (DDWERDQDMDE). Residues 1277–1328 (DYNREMERDMDRDVDRISRPMDMYDRSLDNEWDRDYGRPLDEQESQFRERDI) are compositionally biased toward basic and acidic residues. Over residues 1330–1342 (SLPPLPPLPPLPP) the composition is skewed to pro residues. Serine 1402 carries the phosphoserine modification. Disordered stretches follow at residues 1407–1438 (PSDV…SLDS), 1469–1573 (QKEQ…EQER), and 1602–1828 (IPSA…PPGR). Low complexity predominate over residues 1417-1430 (AEHMPSSHHSSEMM). Basic and acidic residues predominate over residues 1469 to 1480 (QKEQLQKMKDFG). The span at 1505 to 1520 (MYPPPGSYRPPPPMGK) shows a compositional bias: pro residues. Positions 1521–1539 (PPGSIVRPSAPPARSSVPV) are enriched in low complexity. Composition is skewed to pro residues over residues 1540–1562 (TRPP…PPVI) and 1606–1636 (PVLP…PPPV). Lysine 1652 participates in a covalent cross-link: Glycyl lysine isopeptide (Lys-Gly) (interchain with G-Cter in SUMO2). Composition is skewed to basic and acidic residues over residues 1662 to 1696 (ITLR…EPYF), 1704 to 1774 (ADHR…DRPV), 1783 to 1793 (GERRTYPEERM), and 1809 to 1828 (RVEK…PPGR). Residue lysine 1710 forms a Glycyl lysine isopeptide (Lys-Gly) (interchain with G-Cter in SUMO2) linkage. The segment at 2096–2103 (KKRVRWAD) is involved in interaction with PPP1CA.

In terms of assembly, interacts with PPP1CA and NCOA5. Forms a complex with ILF2, ILF3, KHDRBS1, RBMX, NCOA5 and PPP1CA. Expressed in neuronal, neuroblastoma and embryonic kidney cell lines (at protein level).

It is found in the nucleus. The protein localises to the nucleus speckle. Functionally, plays a role in the reduction of telomerase activity during differentiation of embryonic stem cells by binding to the core promoter of TERT and controlling its down-regulation. The protein is YLP motif-containing protein 1 (YLPM1) of Homo sapiens (Human).